We begin with the raw amino-acid sequence, 42 residues long: Potassium channel toxin gamma-KTx 1.2 (42 aa).

4 disulfide bridges follow: Cys5–Cys23, Cys11–Cys34, Cys20–Cys39, and Cys24–Cys41.

Belongs to the ergtoxin family. Gamma-KTx 1 subfamily. In terms of tissue distribution, expressed by the venom gland.

It is found in the secreted. Blocks Kv11/ERG potassium channels. The polypeptide is Potassium channel toxin gamma-KTx 1.2 (Centruroides elegans (Bark scorpion)).